The following is a 263-amino-acid chain: 3-methyl-2-oxobutanoate hydroxymethyltransferase (263 aa).

The Mg(2+) site is built by D45 and D84. Residues 45-46, D84, and K112 contribute to the 3-methyl-2-oxobutanoate site; that span reads DS. E114 lines the Mg(2+) pocket. The active-site Proton acceptor is E180.

It belongs to the PanB family. In terms of assembly, homodecamer; pentamer of dimers. It depends on Mg(2+) as a cofactor.

Its subcellular location is the cytoplasm. The catalysed reaction is 3-methyl-2-oxobutanoate + (6R)-5,10-methylene-5,6,7,8-tetrahydrofolate + H2O = 2-dehydropantoate + (6S)-5,6,7,8-tetrahydrofolate. The protein operates within cofactor biosynthesis; (R)-pantothenate biosynthesis; (R)-pantoate from 3-methyl-2-oxobutanoate: step 1/2. Its function is as follows. Catalyzes the reversible reaction in which hydroxymethyl group from 5,10-methylenetetrahydrofolate is transferred onto alpha-ketoisovalerate to form ketopantoate. The protein is 3-methyl-2-oxobutanoate hydroxymethyltransferase of Salmonella enteritidis PT4 (strain P125109).